Consider the following 154-residue polypeptide: MAQSINITELNLPQLEMLKNQLDQEVEFLSTSIAQLKVVQTKYVEAKDCLNVLNKSNEGKELLVPLTSSMYVPGKLHDVEHVLIDVGTGYYVEKTAEDAKDFFKRKIDFLTKQMEKIQPALQEKHAMKQAVMEMMSQKIRQLTALGAAQATAKA.

A2 is subject to N-acetylalanine. Position 42 is an N6-acetyllysine (K42). S56 bears the Phosphoserine mark.

It belongs to the prefoldin subunit alpha family. In terms of assembly, heterohexamer of two PFD-alpha type and four PFD-beta type subunits.

The protein localises to the nucleus. In terms of biological role, binds specifically to cytosolic chaperonin (c-CPN) and transfers target proteins to it. Binds to nascent polypeptide chain and promotes folding in an environment in which there are many competing pathways for nonnative proteins. Represses the transcriptional activity of MYC. The protein is Prefoldin subunit 5 (PFDN5) of Pongo abelii (Sumatran orangutan).